The sequence spans 580 residues: G1/S-specific cyclin CLN3 (580 aa).

The span at 454-469 (FTPTSSSSSPSPFNSP) shows a compositional bias: low complexity. Disordered stretches follow at residues 454-498 (FTPT…QNSF) and 546-580 (MATA…KKTR). Composition is skewed to polar residues over residues 470–480 (YKTSSSMTTPD) and 563–580 (TSSV…KKTR).

Belongs to the cyclin family.

Functionally, essential for the control of the cell cycle at the G1/S (start) transition. CLN3 may be an upstream activator of the G1 cyclins which directly catalyze start. This Saccharomyces cerevisiae (strain ATCC 204508 / S288c) (Baker's yeast) protein is G1/S-specific cyclin CLN3 (CLN3).